We begin with the raw amino-acid sequence, 348 residues long: Anthranilate phosphoribosyltransferase (348 aa).

5-phospho-alpha-D-ribose 1-diphosphate-binding positions include glycine 84, 87-88 (GD), threonine 92, 94-97 (NITT), 112-120 (KHGNRSVSS), and serine 124. Glycine 84 contacts anthranilate. Threonine 96 contacts Mg(2+). Residue asparagine 115 participates in anthranilate binding. Arginine 170 contacts anthranilate. Mg(2+) contacts are provided by aspartate 228 and glutamate 229.

It belongs to the anthranilate phosphoribosyltransferase family. As to quaternary structure, homodimer. Requires Mg(2+) as cofactor.

It catalyses the reaction N-(5-phospho-beta-D-ribosyl)anthranilate + diphosphate = 5-phospho-alpha-D-ribose 1-diphosphate + anthranilate. The protein operates within amino-acid biosynthesis; L-tryptophan biosynthesis; L-tryptophan from chorismate: step 2/5. In terms of biological role, catalyzes the transfer of the phosphoribosyl group of 5-phosphorylribose-1-pyrophosphate (PRPP) to anthranilate to yield N-(5'-phosphoribosyl)-anthranilate (PRA). In Corynebacterium glutamicum (strain R), this protein is Anthranilate phosphoribosyltransferase.